Here is a 129-residue protein sequence, read N- to C-terminus: Phosphoribosyl-AMP cyclohydrolase (129 aa).

Asp-86 contributes to the Mg(2+) binding site. Cys-87 is a Zn(2+) binding site. Asp-88 and Asp-90 together coordinate Mg(2+). Zn(2+) contacts are provided by Cys-104 and Cys-111.

Belongs to the PRA-CH family. Homodimer. It depends on Mg(2+) as a cofactor. Zn(2+) is required as a cofactor.

It localises to the cytoplasm. It catalyses the reaction 1-(5-phospho-beta-D-ribosyl)-5'-AMP + H2O = 1-(5-phospho-beta-D-ribosyl)-5-[(5-phospho-beta-D-ribosylamino)methylideneamino]imidazole-4-carboxamide. It participates in amino-acid biosynthesis; L-histidine biosynthesis; L-histidine from 5-phospho-alpha-D-ribose 1-diphosphate: step 3/9. Its function is as follows. Catalyzes the hydrolysis of the adenine ring of phosphoribosyl-AMP. The polypeptide is Phosphoribosyl-AMP cyclohydrolase (Ignicoccus hospitalis (strain KIN4/I / DSM 18386 / JCM 14125)).